The following is a 261-amino-acid chain: Tryptophan synthase alpha chain (261 aa).

Active-site proton acceptor residues include glutamate 49 and aspartate 60.

This sequence belongs to the TrpA family. In terms of assembly, tetramer of two alpha and two beta chains.

The enzyme catalyses (1S,2R)-1-C-(indol-3-yl)glycerol 3-phosphate + L-serine = D-glyceraldehyde 3-phosphate + L-tryptophan + H2O. The protein operates within amino-acid biosynthesis; L-tryptophan biosynthesis; L-tryptophan from chorismate: step 5/5. In terms of biological role, the alpha subunit is responsible for the aldol cleavage of indoleglycerol phosphate to indole and glyceraldehyde 3-phosphate. This is Tryptophan synthase alpha chain from Leifsonia xyli subsp. xyli (strain CTCB07).